A 122-amino-acid chain; its full sequence is Large ribosomal subunit protein uL14 (122 aa).

The protein belongs to the universal ribosomal protein uL14 family. As to quaternary structure, part of the 50S ribosomal subunit. Forms a cluster with proteins L3 and L19. In the 70S ribosome, L14 and L19 interact and together make contacts with the 16S rRNA in bridges B5 and B8.

Binds to 23S rRNA. Forms part of two intersubunit bridges in the 70S ribosome. The sequence is that of Large ribosomal subunit protein uL14 from Corynebacterium kroppenstedtii (strain DSM 44385 / JCM 11950 / CIP 105744 / CCUG 35717).